A 278-amino-acid chain; its full sequence is Elongation factor Ts (278 aa).

Residues 80 to 83 (TDFV) form an involved in Mg(2+) ion dislocation from EF-Tu region.

Belongs to the EF-Ts family.

The protein localises to the cytoplasm. Its function is as follows. Associates with the EF-Tu.GDP complex and induces the exchange of GDP to GTP. It remains bound to the aminoacyl-tRNA.EF-Tu.GTP complex up to the GTP hydrolysis stage on the ribosome. The polypeptide is Elongation factor Ts (Renibacterium salmoninarum (strain ATCC 33209 / DSM 20767 / JCM 11484 / NBRC 15589 / NCIMB 2235)).